Here is a 329-residue protein sequence, read N- to C-terminus: Sex comb on midleg-like protein 1 (329 aa).

2 positions are modified to phosphoserine: Ser-138 and Ser-238. The segment at 138 to 157 (SPTLPVSRRENNSPSNLPRP) is disordered. The SAM domain maps to 258–325 (WSVEAVVLFL…YYIDRLKQGK (68 aa)).

It belongs to the SCM family.

It is found in the nucleus. In terms of biological role, putative Polycomb group (PcG) protein. PcG proteins act by forming multiprotein complexes, which are required to maintain the transcriptionally repressive state of homeotic genes throughout development. May be involved in spermatogenesis during sexual maturation. This chain is Sex comb on midleg-like protein 1 (SCML1), found in Pan troglodytes (Chimpanzee).